A 597-amino-acid chain; its full sequence is Alpha-1,2-mannosyltransferase MNN2 (597 aa).

Residues 1-12 (MLLTKRFSKLFK) lie on the Cytoplasmic side of the membrane. A helical; Signal-anchor for type II membrane protein transmembrane segment spans residues 13–28 (LTFIVLILCGLFVITN). Residues 29 to 597 (KYMDENTSVK…STHDKAIAGK (569 aa)) lie on the Extracellular side of the membrane. Asn-34, Asn-363, and Asn-473 each carry an N-linked (GlcNAc...) asparagine glycan.

The protein belongs to the MNN1/MNT family. In terms of assembly, interacts with SVP26.

The protein localises to the golgi apparatus membrane. Its pathway is protein modification; protein glycosylation. Its function is as follows. Alpha-1,2-mannosyltransferase, responsible for addition of the first alpha-1,2-linked mannose to form the branches on the mannan backbone of oligosaccharides. The polypeptide is Alpha-1,2-mannosyltransferase MNN2 (MNN2) (Saccharomyces cerevisiae (strain ATCC 204508 / S288c) (Baker's yeast)).